The sequence spans 76 residues: ATP synthase subunit 9, mitochondrial (76 aa).

2 consecutive transmembrane segments (helical) span residues 14–34 (ISTIGLIGAGIGIGIVFAALI) and 56–76 (ALSEATGLFCLMISFMLLFAV).

Belongs to the ATPase C chain family. In terms of assembly, F-type ATPases have 2 components, CF(1) - the catalytic core - and CF(0) - the membrane proton channel. CF(1) has five subunits: alpha(3), beta(3), gamma(1), delta(1), epsilon(1). CF(0) has three main subunits: a, b and c.

It is found in the mitochondrion membrane. In terms of biological role, mitochondrial membrane ATP synthase (F(1)F(0) ATP synthase or Complex V) produces ATP from ADP in the presence of a proton gradient across the membrane which is generated by electron transport complexes of the respiratory chain. F-type ATPases consist of two structural domains, F(1) - containing the extramembraneous catalytic core and F(0) - containing the membrane proton channel, linked together by a central stalk and a peripheral stalk. During catalysis, ATP synthesis in the catalytic domain of F(1) is coupled via a rotary mechanism of the central stalk subunits to proton translocation. Part of the complex F(0) domain. A homomeric c-ring of probably 10 subunits is part of the complex rotary element. The chain is ATP synthase subunit 9, mitochondrial (ATP9) from Candida glabrata (strain ATCC 2001 / BCRC 20586 / JCM 3761 / NBRC 0622 / NRRL Y-65 / CBS 138) (Yeast).